The chain runs to 218 residues: Imidazole glycerol phosphate synthase subunit HisH (218 aa).

The Glutamine amidotransferase type-1 domain occupies 7 to 211 (STVIIDTGCA…LALDKASLDA (205 aa)). The Nucleophile role is filled by Cys-82. Catalysis depends on residues His-186 and Glu-188.

As to quaternary structure, heterodimer of HisH and HisF.

Its subcellular location is the cytoplasm. It carries out the reaction 5-[(5-phospho-1-deoxy-D-ribulos-1-ylimino)methylamino]-1-(5-phospho-beta-D-ribosyl)imidazole-4-carboxamide + L-glutamine = D-erythro-1-(imidazol-4-yl)glycerol 3-phosphate + 5-amino-1-(5-phospho-beta-D-ribosyl)imidazole-4-carboxamide + L-glutamate + H(+). The catalysed reaction is L-glutamine + H2O = L-glutamate + NH4(+). Its pathway is amino-acid biosynthesis; L-histidine biosynthesis; L-histidine from 5-phospho-alpha-D-ribose 1-diphosphate: step 5/9. IGPS catalyzes the conversion of PRFAR and glutamine to IGP, AICAR and glutamate. The HisH subunit catalyzes the hydrolysis of glutamine to glutamate and ammonia as part of the synthesis of IGP and AICAR. The resulting ammonia molecule is channeled to the active site of HisF. The sequence is that of Imidazole glycerol phosphate synthase subunit HisH from Shewanella sediminis (strain HAW-EB3).